We begin with the raw amino-acid sequence, 155 residues long: MLSLRQSIRFFKPATRTLCSSRYLLQQKPVVKTAQNLAEVNGPETLIGPGAKEGTVPTDLDQETGLARLELLGKLEGIDVFDTKPLDSSRKGTMKDPIIIESYDDYRYVGCTGSPAGSHTIMWLKPTVNEVARCWECGSVYKLNPVGVPNDDHHH.

Residues 1–25 constitute a mitochondrion transit peptide; that stretch reads MLSLRQSIRFFKPATRTLCSSRYLL. Position 55 is a phosphothreonine (Thr55). Positions 111, 119, 134, and 137 each coordinate Zn(2+).

The protein belongs to the cytochrome c oxidase subunit 5B family. As to quaternary structure, component of the cytochrome c oxidase (complex IV, CIV), a multisubunit enzyme composed of 12 subunits. The complex is composed of a catalytic core of 3 subunits COX1, COX2 and COX3, encoded in the mitochondrial DNA, and 9 supernumerary subunits COX4, COX5A (or COX5B), COX6, COX7, COX8, COX9, COX12, COX13 and COX26, which are encoded in the nuclear genome. The complex exists as a monomer or a dimer and forms supercomplexes (SCs) in the inner mitochondrial membrane with a dimer of ubiquinol-cytochrome c oxidoreductase (cytochrome b-c1 complex, complex III, CIII), resulting in 2 different assemblies (supercomplexes III(2)IV and III(2)IV(2)).

Its subcellular location is the mitochondrion inner membrane. The protein operates within energy metabolism; oxidative phosphorylation. Functionally, component of the cytochrome c oxidase, the last enzyme in the mitochondrial electron transport chain which drives oxidative phosphorylation. The respiratory chain contains 3 multisubunit complexes succinate dehydrogenase (complex II, CII), ubiquinol-cytochrome c oxidoreductase (cytochrome b-c1 complex, complex III, CIII) and cytochrome c oxidase (complex IV, CIV), that cooperate to transfer electrons derived from NADH and succinate to molecular oxygen, creating an electrochemical gradient over the inner membrane that drives transmembrane transport and the ATP synthase. Cytochrome c oxidase is the component of the respiratory chain that catalyzes the reduction of oxygen to water. Electrons originating from reduced cytochrome c in the intermembrane space (IMS) are transferred via the dinuclear copper A center (CU(A)) of COX2 and heme A of COX1 to the active site in COX1, a binuclear center (BNC) formed by heme A3 and copper B (CU(B)). The BNC reduces molecular oxygen to 2 water molecules using 4 electrons from cytochrome c in the IMS and 4 protons from the mitochondrial matrix. The chain is Cytochrome c oxidase subunit 4, mitochondrial (COX4) from Saccharomyces cerevisiae (strain ATCC 204508 / S288c) (Baker's yeast).